We begin with the raw amino-acid sequence, 348 residues long: Chloroacetanilide N-alkylformylase, oxygenase component (348 aa).

The region spanning 7 to 108 is the Rieske domain; sequence WYAVAWCDEV…ARERHKLIWA (102 aa). Residues cysteine 47, histidine 49, cysteine 66, and histidine 69 each coordinate [2Fe-2S] cluster. Residues histidine 159 and histidine 164 each contribute to the Fe cation site. Histidine 250 provides a ligand contact to substrate. Residue aspartate 293 participates in Fe cation binding.

The chloroacetanilide N-alkylformylase multicomponent enzyme system is composed of an oxygenase component (CndA) and an electron transfer component formed by a ferredoxin reductase (CndC1) and a ferredoxin (CndB1). In vitro, chloroacetanilide N-alkylformylase assays in which CndB1 is substituted for CndB2 demonstrate that the two enzymes possess nearly identical activities. [2Fe-2S] cluster is required as a cofactor.

The enzyme catalyses butachlor + 2 reduced [2Fe-2S]-[ferredoxin] + O2 + 2 H(+) = butyl formate + N-(2,6-diethylphenyl)-2-chloroacetamide + 2 oxidized [2Fe-2S]-[ferredoxin] + H2O. It catalyses the reaction alachlor + 2 reduced [2Fe-2S]-[ferredoxin] + O2 + 2 H(+) = methyl formate + N-(2,6-diethylphenyl)-2-chloroacetamide + 2 oxidized [2Fe-2S]-[ferredoxin] + H2O. It carries out the reaction acetochlor + 2 reduced [2Fe-2S]-[ferredoxin] + O2 + 2 H(+) = N-(2-ethyl-6-methylphenyl)-2-chloroacetamide + ethyl formate + 2 oxidized [2Fe-2S]-[ferredoxin] + H2O. Activity enhanced by Fe(2+) and Mg(2+) ions. Divalent cations such as Ca(2+), Cr(2+), Co(2+), and Mn(2+) show moderate inhibition of the enzyme, whereas heavy metal ions such as Ag(+), Cu(2+), Pb(2+), Hg(2+), Ni(2+) and Zn(2+) severely inhibit the activity. In terms of biological role, component of the chloroacetanilide N-alkylformylase multicomponent enzyme system involved in the degradation of chloroacetanilide herbicides (N-alkoxyalkyl-N-chloroacetyl-substituted aniline derivatives). In vitro, catalyzes the N-dealkylation of butachlor, alachlor and acetochlor to yield 2-chloro-N-(2,6-diethylphenyl)acetamide (CDEPA) (for alachlor and butachlor) and 2-chloro-N-(2-methyl-6-ethylphenyl)acetamide (CMEPA) (for acetochlor). This Rhizorhabdus wittichii (strain DC-6 / KACC 16600) (Sphingomonas wittichii) protein is Chloroacetanilide N-alkylformylase, oxygenase component.